The sequence spans 174 residues: ATP-dependent protease subunit HslV (174 aa).

T2 is a catalytic residue. 3 residues coordinate Na(+): G157, C160, and T163.

It belongs to the peptidase T1B family. HslV subfamily. In terms of assembly, a double ring-shaped homohexamer of HslV is capped on each side by a ring-shaped HslU homohexamer. The assembly of the HslU/HslV complex is dependent on binding of ATP.

It is found in the cytoplasm. It catalyses the reaction ATP-dependent cleavage of peptide bonds with broad specificity.. Allosterically activated by HslU binding. In terms of biological role, protease subunit of a proteasome-like degradation complex believed to be a general protein degrading machinery. The sequence is that of ATP-dependent protease subunit HslV from Shewanella oneidensis (strain ATCC 700550 / JCM 31522 / CIP 106686 / LMG 19005 / NCIMB 14063 / MR-1).